Consider the following 199-residue polypeptide: Isopentenyl-diphosphate Delta-isomerase (199 aa).

Mn(2+)-binding residues include His40 and His47. The 142-residue stretch at 45-186 (PRHLAFSCHV…PALLSPWAVE (142 aa)) folds into the Nudix hydrolase domain. Residue Cys82 is part of the active site. Cys82 provides a ligand contact to Mg(2+). His84 lines the Mn(2+) pocket. Glu102 lines the Mg(2+) pocket. Residues Glu131 and Glu133 each contribute to the Mn(2+) site. Residue Glu133 is part of the active site.

The protein belongs to the IPP isomerase type 1 family. It depends on Mg(2+) as a cofactor. Mn(2+) serves as cofactor.

It localises to the cytoplasm. It catalyses the reaction isopentenyl diphosphate = dimethylallyl diphosphate. It participates in isoprenoid biosynthesis; dimethylallyl diphosphate biosynthesis; dimethylallyl diphosphate from isopentenyl diphosphate: step 1/1. In terms of biological role, catalyzes the 1,3-allylic rearrangement of the homoallylic substrate isopentenyl (IPP) to its highly electrophilic allylic isomer, dimethylallyl diphosphate (DMAPP). The chain is Isopentenyl-diphosphate Delta-isomerase from Cutibacterium acnes (strain DSM 16379 / KPA171202) (Propionibacterium acnes).